The chain runs to 235 residues: Calcium-activated potassium channel subunit beta-2 (235 aa).

The ball and chain stretch occupies residues 1–45 (MFIWTSGRTSSSYRQDEKRNIYQKIRDHDLLDKRKTVTALKAGED). The Cytoplasmic segment spans residues 1–46 (MFIWTSGRTSSSYRQDEKRNIYQKIRDHDLLDKRKTVTALKAGEDR). A helical transmembrane segment spans residues 47–67 (AILLGLAMMVCSIMMYFLLGI). Residues 68–194 (TLLRSYMQSV…VILTKLYSSN (127 aa)) lie on the Extracellular side of the membrane. N88, N96, and N119 each carry an N-linked (GlcNAc...) asparagine glycan. Residues 195 to 215 (VLFHSLFWPTCMMAGGVAIVA) traverse the membrane as a helical segment. Residues 216 to 235 (MVKLTQYLSLLCERIQRINR) lie on the Cytoplasmic side of the membrane.

It belongs to the KCNMB (TC 8.A.14.1) family. KCNMB2 subfamily. In terms of assembly, interacts with KCNMA1 tetramer. There are probably 4 molecules of KCMNB2 per KCNMA1 tetramer. Post-translationally, N-glycosylated.

Its subcellular location is the membrane. In terms of biological role, regulatory subunit of the calcium activated potassium KCNMA1 (maxiK) channel. Modulates the calcium sensitivity and gating kinetics of KCNMA1, thereby contributing to KCNMA1 channel diversity. Acts as a negative regulator that confers rapid and complete inactivation of KCNMA1 channel complex. The protein is Calcium-activated potassium channel subunit beta-2 (Kcnmb2) of Mus musculus (Mouse).